The primary structure comprises 531 residues: SWI/SNF-related matrix-associated actin-dependent regulator of chromatin subfamily D member 2 (531 aa).

Residues Arg-81 and Arg-104 each carry the asymmetric dimethylarginine modification. Residue Ser-203 is modified to Phosphoserine. The tract at residues 205–227 is disordered; sequence SKAEGDTAGTTGTPGGTPAGDKV. Thr-217 is modified (phosphothreonine). Lys-226 is covalently cross-linked (Glycyl lysine isopeptide (Lys-Gly) (interchain with G-Cter in SUMO2)). Residues 306–383 form the SWIB/MDM2 domain; sequence HQPPQYKLDP…PMKLAGLLQH (78 aa).

This sequence belongs to the SMARCD family. In terms of assembly, component of the multiprotein chromatin-remodeling complexes SWI/SNF: SWI/SNF-A (BAF), SWI/SNF-B (PBAF) and related complexes. The canonical complex contains a catalytic subunit (either SMARCA4/BRG1/BAF190A or SMARCA2/BRM/BAF190B), and at least SMARCE1, ACTL6A/BAF53, SMARCC1/BAF155, SMARCC2/BAF170, and SMARCB1/SNF5/BAF47. Other subunits specific to each of the complexes may also be present permitting several possible combinations developmentally and tissue specific. Component of the BAF complex, which includes at least actin (ACTB), ARID1A/BAF250A, ARID1B/BAF250B, SMARCA2/BRM, SMARCA4/BRG1, ACTL6A/BAF53, ACTL6B/BAF53B, SMARCE1/BAF57, SMARCC1/BAF155, SMARCC2/BAF170, SMARCB1/SNF5/INI1, and one or more SMARCD1/BAF60A, SMARCD2/BAF60B, or SMARCD3/BAF60C. In muscle cells, the BAF complex also contains DPF3. Component of the SWI/SNF-B (PBAF) chromatin remodeling complex, at least composed of SMARCA4/BRG1, SMARCB1/BAF47/SNF5, ACTL6A/BAF53A or ACTL6B/BAF53B, SMARCE1/BAF57, SMARCD1/BAF60A, SMARCD2/BAF60B, perhaps SMARCD3/BAF60C, SMARCC1/BAF155, SMARCC2/BAF170, PBRM1/BAF180, ARID2/BAF200 and actin (ACTB). Interacts with UNKL. Interacts with CEBPE. Post-translationally, ubiquitinated through a signaling process involving RAC1 and the RING finger protein UNKL.

The protein resides in the nucleus. Functionally, involved in transcriptional activation and repression of select genes by chromatin remodeling (alteration of DNA-nucleosome topology). Component of SWI/SNF chromatin remodeling complexes that carry out key enzymatic activities, changing chromatin structure by altering DNA-histone contacts within a nucleosome in an ATP-dependent manner. Critical regulator of myeloid differentiation, controlling granulocytopoiesis and the expression of genes involved in neutrophil granule formation. This is SWI/SNF-related matrix-associated actin-dependent regulator of chromatin subfamily D member 2 (SMARCD2) from Bos taurus (Bovine).